The chain runs to 466 residues: tRNA-2-methylthio-N(6)-dimethylallyladenosine synthase (466 aa).

The MTTase N-terminal domain occupies 2–118 (KRFYIHTIGC…LPGHIQAVAH (117 aa)). Residues C11, C47, C81, C157, C161, and C164 each contribute to the [4Fe-4S] cluster site. Residues 143–372 (DSSGVTGFIT…LELQNRITAE (230 aa)) form the Radical SAM core domain. The TRAM domain occupies 375-453 (RALEGRVEQV…AHSLSGIAVG (79 aa)).

The protein belongs to the methylthiotransferase family. MiaB subfamily. Monomer. [4Fe-4S] cluster is required as a cofactor.

The protein resides in the cytoplasm. It carries out the reaction N(6)-dimethylallyladenosine(37) in tRNA + (sulfur carrier)-SH + AH2 + 2 S-adenosyl-L-methionine = 2-methylsulfanyl-N(6)-dimethylallyladenosine(37) in tRNA + (sulfur carrier)-H + 5'-deoxyadenosine + L-methionine + A + S-adenosyl-L-homocysteine + 2 H(+). Its function is as follows. Catalyzes the methylthiolation of N6-(dimethylallyl)adenosine (i(6)A), leading to the formation of 2-methylthio-N6-(dimethylallyl)adenosine (ms(2)i(6)A) at position 37 in tRNAs that read codons beginning with uridine. This chain is tRNA-2-methylthio-N(6)-dimethylallyladenosine synthase, found in Desulfosudis oleivorans (strain DSM 6200 / JCM 39069 / Hxd3) (Desulfococcus oleovorans).